The chain runs to 132 residues: Small ribosomal subunit protein uS9 (132 aa).

This sequence belongs to the universal ribosomal protein uS9 family.

In Mycoplasma pneumoniae (strain ATCC 29342 / M129 / Subtype 1) (Mycoplasmoides pneumoniae), this protein is Small ribosomal subunit protein uS9 (rpsI).